A 473-amino-acid chain; its full sequence is MAQHDFVPAWLNFSTPQSSKSSTATFDKHGEHLSRGEGRFGISRRRHNSSDGFFNNGPLRTTGDSWHQPSLFRHDSVDSGVSKGAYAGTTGWHGSSRGHDGMSQRSGGSSTGNHRHWNGSFHSRKGCAFQEKTPTEIREEKKEDKVEKLQFEEEDFPSLNPEAGKQNQPCRPVGTPSGVWENPPSAKQPSKMLVIKKISKEDPAAAFSAAFTSSGSHHANGNKVSTMVPSVYKNLVPKPAPPPSKPNAWKANRTEHKPGSLCSSRESAFTNPISVTKPVGLAAGAGLHSPKESPSSTTPPIEISSSRLTKLTRRTTDRKSEFLKTLKDERNGDCSESRDCDKLEGLRLEGSHTPEPKENGEQGCLQNGLSLPMVEEGEVLSHSLEAEHRLLKAMGWQEYPENDESCLPLTEDELKEFHLRTEQLRRNGFGKNGLLQSRSCSLSSPWRSTCIAECEDSDSETSSSQTSDDDAWK.

Residues 14–25 (STPQSSKSSTAT) show a composition bias toward polar residues. The tract at residues 14 to 55 (STPQSSKSSTATFDKHGEHLSRGEGRFGISRRRHNSSDGFFN) is disordered. The segment covering 26–38 (FDKHGEHLSRGEG) has biased composition (basic and acidic residues). Ser-49 and Ser-76 each carry phosphoserine. Disordered stretches follow at residues 88–127 (GTTG…RKGC) and 155–189 (DFPS…AKQP). Polar residues predominate over residues 103-112 (SQRSGGSSTG). Basic residues predominate over residues 113–125 (NHRHWNGSFHSRK). Position 199 is a phosphoserine (Ser-199). 2 disordered regions span residues 235 to 267 (LVPK…SRES) and 281 to 316 (LAAG…RRTT). At Ser-289 the chain carries Phosphoserine. Low complexity predominate over residues 292-309 (ESPSSTTPPIEISSSRLT). Phosphothreonine is present on Thr-298. Residue Ser-381 is modified to Phosphoserine. Residues 453 to 473 (ECEDSDSETSSSQTSDDDAWK) form a disordered region.

Belongs to the vasculin family.

It is found in the nucleus. Possible transcription factor. The sequence is that of Vasculin-like protein 1 (Gpbp1l1) from Mus musculus (Mouse).